An 873-amino-acid polypeptide reads, in one-letter code: Bifunctional heparan sulfate N-deacetylase/N-sulfotransferase 3 (873 aa).

Over 1 to 13 (MSFIMKPHRHFQR) the chain is Cytoplasmic. Residues 14 to 34 (TLILLATFCMVSIIISAYYLY) form a helical; Signal-anchor for type II membrane protein membrane-spanning segment. Topologically, residues 35–873 (SGYKQESEVS…WLRQELQKVR (839 aa)) are lumenal. The heparan sulfate N-deacetylase 3 stretch occupies residues 36–589 (GYKQESEVSG…KRHRDIWSKE (554 aa)). 4 N-linked (GlcNAc...) asparagine glycosylation sites follow: N146, N226, N342, and N392. Positions 590–873 (KTCDRLPKFL…WLRQELQKVR (284 aa)) are heparan sulfate N-sulfotransferase 3. The active-site For sulfotransferase activity is K605. 605–609 (KTGTT) serves as a coordination point for 3'-phosphoadenylyl sulfate. The N-linked (GlcNAc...) asparagine glycan is linked to N658. S703 is a binding site for 3'-phosphoadenylyl sulfate. Residue N794 is glycosylated (N-linked (GlcNAc...) asparagine). C809 and C819 are disulfide-bonded. 824–828 (KGRKY) lines the 3'-phosphoadenylyl sulfate pocket.

It belongs to the sulfotransferase 1 family. NDST subfamily. In terms of assembly, monomer. In terms of tissue distribution, strongly expressed strongly in brain. Expressed at high level at embryonic day 11 compared to other stages of development. Weakly expressed in adult heart, kidney, muscle, endothelial cells and testis but not in other tissues.

The protein resides in the golgi apparatus membrane. The enzyme catalyses alpha-D-glucosaminyl-[heparan sulfate](n) + 3'-phosphoadenylyl sulfate = N-sulfo-alpha-D-glucosaminyl-[heparan sulfate](n) + adenosine 3',5'-bisphosphate + 2 H(+). It functions in the pathway glycan metabolism; heparan sulfate biosynthesis. Its pathway is glycan metabolism; heparin biosynthesis. Functionally, essential bifunctional enzyme that catalyzes both the N-deacetylation and the N-sulfation of glucosamine (GlcNAc) of the glycosaminoglycan in heparan sulfate. Modifies the GlcNAc-GlcA disaccharide repeating sugar backbone to make N-sulfated heparosan, a prerequisite substrate for later modifications in heparin biosynthesis. Has high deacetylase activity but low sulfotransferase activity. In Mus musculus (Mouse), this protein is Bifunctional heparan sulfate N-deacetylase/N-sulfotransferase 3 (Ndst3).